A 666-amino-acid polypeptide reads, in one-letter code: ESX-1 secretion-associated protein EspI (666 aa).

The segment covering 1-15 (MAADYDKLFRPHEGM) has biased composition (basic and acidic residues). The interval 1 to 378 (MAADYDKLFR…ATKPPKVVSQ (378 aa)) is disordered. Residues 22 to 31 (AAQPFFDPSA) show a composition bias toward low complexity. Pro residues-rich tracts occupy residues 64–80 (APPPPPPPPPPPPPTPM), 87–144 (PPSP…PAPT), and 188–205 (PAPPWAKMPIGEPPPAPS). Residues 222–231 (HSRRARRGHR) show a composition bias toward basic residues. The segment covering 284–297 (PTRPAPTEPPPSPS) has biased composition (pro residues). Basic residues predominate over residues 357–371 (PKVKKVKPQKPKATK). 424 to 431 (LKGGAGKT) serves as a coordination point for ATP.

In terms of biological role, required to repress ESX-1-mediated secretion under low ATP conditions. This function requires the ATP-binding motif. This chain is ESX-1 secretion-associated protein EspI, found in Mycobacterium tuberculosis (strain CDC 1551 / Oshkosh).